A 189-amino-acid polypeptide reads, in one-letter code: Elongation factor P (189 aa).

This sequence belongs to the elongation factor P family.

It is found in the cytoplasm. Its pathway is protein biosynthesis; polypeptide chain elongation. Functionally, involved in peptide bond synthesis. Stimulates efficient translation and peptide-bond synthesis on native or reconstituted 70S ribosomes in vitro. Probably functions indirectly by altering the affinity of the ribosome for aminoacyl-tRNA, thus increasing their reactivity as acceptors for peptidyl transferase. The sequence is that of Elongation factor P from Onion yellows phytoplasma (strain OY-M).